We begin with the raw amino-acid sequence, 563 residues long: Grainyhead-like protein 1 homolog (563 aa).

In terms of domain architecture, Grh/CP2 DB spans 194 to 428; the sequence is NNLGFQYVLE…ELDKPAALFI (235 aa). Interaction with DNA stretches follow at residues 326–335 and 372–375; these read TDFSTQKGVK and RKLR. The interval 377-405 is disordered; it reads EDKRAQKRKVQEYTAGALPGGRKKSDGEY.

It belongs to the grh/CP2 family. Grainyhead subfamily.

Its subcellular location is the nucleus. Probable transcription factor. Binds a motif with the core sequence 5'-C[ACT][TG]G-3' in regulatory elements of target genes. Many putative target genes show oscillating expression levels, perhaps as a result of rhythmic variation in accumulation of grh-1. Plays a role in proper cuticle formation and/or barrier function and is required repetitively during development, for successful completion of each molt. Involved in modulating lifespan. Plays a role in defense response to bacteria. May act upstream of the p38 MAP kinase / pmk-1 pathway. May act downstream of the insulin/IGF-1 receptor signaling (IIS) pathway. The sequence is that of Grainyhead-like protein 1 homolog from Caenorhabditis elegans.